We begin with the raw amino-acid sequence, 288 residues long: Proteasome assembly chaperone 1 (288 aa).

The interval 1–33 (MATFFGEVQSVFSRAVDEEEEDEDDDEEEEEDR) is disordered. Acidic residues predominate over residues 17-33 (DEEEEDEDDDEEEEEDR).

It belongs to the PSMG1 family. In terms of assembly, forms a heterodimer with psmg2. Post-translationally, degraded by the proteasome upon completion of 20S proteasome maturation.

The protein resides in the cytoplasm. It localises to the endoplasmic reticulum. In terms of biological role, chaperone protein which promotes assembly of the 20S proteasome as part of a heterodimer with psmg2. In Xenopus laevis (African clawed frog), this protein is Proteasome assembly chaperone 1.